Consider the following 628-residue polypeptide: Phosphomethylpyrimidine synthase (628 aa).

Substrate is bound by residues asparagine 225, methionine 254, tyrosine 283, histidine 319, 339–341, 380–383, and glutamate 419; these read SRG and DGLR. Histidine 423 contacts Zn(2+). Tyrosine 446 is a substrate binding site. Histidine 487 is a Zn(2+) binding site. Residues cysteine 567, cysteine 570, and cysteine 575 each coordinate [4Fe-4S] cluster.

This sequence belongs to the ThiC family. As to quaternary structure, homodimer. The cofactor is [4Fe-4S] cluster.

It carries out the reaction 5-amino-1-(5-phospho-beta-D-ribosyl)imidazole + S-adenosyl-L-methionine = 4-amino-2-methyl-5-(phosphooxymethyl)pyrimidine + CO + 5'-deoxyadenosine + formate + L-methionine + 3 H(+). It functions in the pathway cofactor biosynthesis; thiamine diphosphate biosynthesis. Its function is as follows. Catalyzes the synthesis of the hydroxymethylpyrimidine phosphate (HMP-P) moiety of thiamine from aminoimidazole ribotide (AIR) in a radical S-adenosyl-L-methionine (SAM)-dependent reaction. In Leptothrix cholodnii (strain ATCC 51168 / LMG 8142 / SP-6) (Leptothrix discophora (strain SP-6)), this protein is Phosphomethylpyrimidine synthase.